A 397-amino-acid polypeptide reads, in one-letter code: Proteasome-activating nucleotidase (397 aa).

Residues 12-58 (GYEDYITFLKRRIRQLELQVRTLEADKERLERELSRLRTEMSRLRQP) adopt a coiled-coil conformation. ATP contacts are provided by residues 182–187 (GCGKTL) and His-321. The interval 395–397 (MYG) is docks into pockets in the proteasome alpha-ring to cause gate opening.

It belongs to the AAA ATPase family. Homohexamer. The hexameric complex has a two-ring architecture resembling a top hat that caps the 20S proteasome core at one or both ends. Upon ATP-binding, the C-terminus of PAN interacts with the alpha-rings of the proteasome core by binding to the intersubunit pockets.

The protein localises to the cytoplasm. In terms of biological role, ATPase which is responsible for recognizing, binding, unfolding and translocation of substrate proteins into the archaeal 20S proteasome core particle. Is essential for opening the gate of the 20S proteasome via an interaction with its C-terminus, thereby allowing substrate entry and access to the site of proteolysis. Thus, the C-termini of the proteasomal ATPase function like a 'key in a lock' to induce gate opening and therefore regulate proteolysis. Unfolding activity requires energy from ATP hydrolysis, whereas ATP binding alone promotes ATPase-20S proteasome association which triggers gate opening, and supports translocation of unfolded substrates. This Thermococcus gammatolerans (strain DSM 15229 / JCM 11827 / EJ3) protein is Proteasome-activating nucleotidase.